We begin with the raw amino-acid sequence, 257 residues long: (R)-2-haloacid dehalogenase (257 aa).

Belongs to the HAD-like hydrolase superfamily. S-2-haloalkanoic acid dehalogenase family.

The enzyme catalyses an (R)-2-haloacid + H2O = a (2S)-2-hydroxycarboxylate + a halide anion + H(+). Catalyzes the hydrolytic dehalogenation of small (R)-2-haloalkanoic acids to yield the corresponding (S)-2-hydroxyalkanoic acids. Acts on acids of short chain lengths, C(2) to C(4), with inversion of configuration at C-2. The polypeptide is (R)-2-haloacid dehalogenase (dehI) (Rhizobium sp. (strain NHG3)).